A 158-amino-acid polypeptide reads, in one-letter code: Sorbin and SH3 domain-containing protein 2 (158 aa).

The SoHo domain occupies 1–46 (MRAATPLQTVDRPKDWYKTMFKQIHMVHKPDDDTDMYNTPYTYNAG). A disordered region spans residues 28-158 (HKPDDDTDMY…TKPQAGRRKV (131 aa)). Residues 50–66 (SPYSAQSHPAAKTQTYR) are compositionally biased toward polar residues. Over residues 71–81 (SHSDNGTDAFK) the composition is skewed to basic and acidic residues. Phosphoserine is present on serine 73. The span at 86-99 (PVPPPHVPPPVPPL) shows a compositional bias: pro residues. Basic and acidic residues predominate over residues 100 to 136 (RPRDRSSTEKHDWDPPDRKVDTRKFRSEPRSIFEYEP). Residue alanine 153 is modified to Alanine amide.

Interacts with ABL1/c-Abl, ABL2/v-Abl/Arg, ACTN, AKT1, CBL, PALLD and PAK1. Interacts with ABL, CBL, DNM1, DNM2, FLOT1, AFDN, PTK2B/PYK2, SAPAP, SPTAN1, SYNJ1, SYNJ2, VCL/vinculin, and WASF. Interacts with PTPN12 and WASF1 via its SH3 domains; this interaction may mediate the partial PTPN12 and WASF1 translocation to focal adhesion sites. Ubiquitinated by CBL. In terms of processing, dephosphorylated by PTPN12. In terms of tissue distribution, expressed in duodenum.

The protein localises to the cytoplasm. Its subcellular location is the perinuclear region. The protein resides in the apical cell membrane. It is found in the cell junction. It localises to the focal adhesion. The protein localises to the cell projection. Its subcellular location is the lamellipodium. In terms of biological role, adapter protein that plays a role in the assembling of signaling complexes, being a link between ABL kinases and actin cytoskeleton. Can form complex with ABL1 and CBL, thus promoting ubiquitination and degradation of ABL1 or with AKT1 and PAK1, thus mediating AKT1-mediated activation of PAK1. May play a role in the regulation of pancreatic cell adhesion, possibly by acting on WASF1 phosphorylation, enhancing phosphorylation by ABL1, as well as dephosphorylation by PTPN12. Increases water and sodium absorption in the intestine and gall-bladder. This Sus scrofa (Pig) protein is Sorbin and SH3 domain-containing protein 2 (SORBS2).